We begin with the raw amino-acid sequence, 142 residues long: MEKEKLKKKLSLLAYRVTQENGTEAPFANEFDDFFEQGLYVDVVSGEALFTSLDKYQSGCGWPAFTQPIDKGVVKEKRDKSLFMERTEVRSSNADSHLGHVFTDGPLDKGDLRYCINSAALRFVPFDQLEAEGYGEYVKYFS.

Residues 3 to 126 (KEKLKKKLSL…NSAALRFVPF (124 aa)) form the MsrB domain. Cys115 acts as the Nucleophile in catalysis.

It belongs to the MsrB Met sulfoxide reductase family.

It catalyses the reaction L-methionyl-[protein] + [thioredoxin]-disulfide + H2O = L-methionyl-(R)-S-oxide-[protein] + [thioredoxin]-dithiol. This Lactococcus lactis subsp. lactis (strain IL1403) (Streptococcus lactis) protein is Peptide methionine sulfoxide reductase MsrB.